Reading from the N-terminus, the 202-residue chain is Imidazoleglycerol-phosphate dehydratase (202 aa).

It belongs to the imidazoleglycerol-phosphate dehydratase family.

It is found in the cytoplasm. The catalysed reaction is D-erythro-1-(imidazol-4-yl)glycerol 3-phosphate = 3-(imidazol-4-yl)-2-oxopropyl phosphate + H2O. Its pathway is amino-acid biosynthesis; L-histidine biosynthesis; L-histidine from 5-phospho-alpha-D-ribose 1-diphosphate: step 6/9. This is Imidazoleglycerol-phosphate dehydratase from Lactococcus lactis subsp. cremoris (strain SK11).